A 140-amino-acid chain; its full sequence is MALRLGLFLIWAGVSMFLQLDPVNGDEQLSEDNVILPKEKKDPASGAETKDNKCVFPFIYGNKKYFDCTLHGSLFLWCSLDADYTGRWKYCTKNDYAKCVFPFIYEGKSYDTCIIIGSTFMNYWCSLSSNYDEDGVWKYC.

An N-terminal signal peptide occupies residues 1-25; sequence MALRLGLFLIWAGVSMFLQLDPVNG. Fibronectin type-II domains are found at residues 49-93 and 94-140; these read TKDN…YCTK and NDYA…WKYC. 4 disulfides stabilise this stretch: cysteine 54/cysteine 78, cysteine 68/cysteine 91, cysteine 99/cysteine 125, and cysteine 113/cysteine 140.

This sequence belongs to the seminal plasma protein family.

The protein resides in the secreted. In terms of biological role, the BSP-A proteins from seminal plasma exhibit both simulatory and inhibitory actions on the release of pituitary gonadotropins. The exact function of these proteins is not known. This chain is Seminal plasma protein A3, found in Bos taurus (Bovine).